A 117-amino-acid polypeptide reads, in one-letter code: Non-specific lipid-transfer protein 3 (117 aa).

The signal sequence occupies residues 1–25; sequence MAGLVKLSCLVLACMIVAGPIATNA. 4 disulfides stabilise this stretch: Cys29–Cys76, Cys39–Cys53, Cys54–Cys99, and Cys74–Cys113.

This sequence belongs to the plant LTP family.

Its function is as follows. Plant non-specific lipid-transfer proteins transfer phospholipids as well as galactolipids across membranes. May play a role in wax or cutin deposition in the cell walls of expanding epidermal cells and certain secretory tissues. The sequence is that of Non-specific lipid-transfer protein 3 (LTP3) from Brassica napus (Rape).